Reading from the N-terminus, the 480-residue chain is RuvB-like helicase 2 (480 aa).

Residue 76–83 (GPPSTGKT) coordinates ATP.

The protein belongs to the RuvB family. In terms of assembly, may form heterododecamers with RVB1. Component of the SWR1 chromatin remodeling complex, the INO80 chromatin remodeling complex, and of the R2TP complex.

It is found in the nucleus. The enzyme catalyses ATP + H2O = ADP + phosphate + H(+). Its function is as follows. DNA helicase which participates in several chromatin remodeling complexes, including the SWR1 and the INO80 complexes. The SWR1 complex mediates the ATP-dependent exchange of histone H2A for the H2A variant HZT1 leading to transcriptional regulation of selected genes by chromatin remodeling. The INO80 complex remodels chromatin by shifting nucleosomes and is involved in DNA repair. Also involved in pre-rRNA processing. In Debaryomyces hansenii (strain ATCC 36239 / CBS 767 / BCRC 21394 / JCM 1990 / NBRC 0083 / IGC 2968) (Yeast), this protein is RuvB-like helicase 2 (RVB2).